A 481-amino-acid chain; its full sequence is Protein hedgehog (481 aa).

Cys93 carries N-palmitoyl cysteine lipidation. Residues Glu157, Glu158, Asp163, Thr193, Glu194, Asp197, and Asp199 each contribute to the Ca(2+) site. Gly265 carries Cholesterol glycine ester lipidation.

Belongs to the hedgehog family. In terms of assembly, interacts with shf. Post-translationally, the C-terminal part of the hedgehog protein precursor displays an autoproteolysis activity that results in the cleavage of the full-length protein into two parts (N-product and C-product). In addition, the C-terminal part displays a cholesterol transferase activity that results by the covalent attachment of a cholesterol moiety to the C-terminal of the newly generated N-product. The N-product is the active species in both local and long-range signaling, whereas the C-product has no signaling activity. Cholesterylation is required for N-product targeting to lipid rafts and multimerization. In terms of processing, N-palmitoylation by Rasp of the hedgehog N-product, within the secretory pathway, is required for the embryonic and larval patterning activities of the hedgehog signal.

Its subcellular location is the nucleus. The protein resides in the cytoplasm. It is found in the cell membrane. The enzyme catalyses glycyl-L-cysteinyl-[protein] + cholesterol + H(+) = [protein]-C-terminal glycyl cholesterol ester + N-terminal L-cysteinyl-[protein]. The C-terminal part of the hedgehog protein precursor displays an autoproteolysis activity that results in the cleavage of the full-length protein into two parts (N-product and C-product). In addition, the C-terminal part displays a cholesterol transferase activity that results by the covalent attachment of a cholesterol moiety to the C-terminal of the newly generated N-product. Once cleaved, the C-product has no signaling activity and diffuses from the cell. In terms of biological role, the dually lipidated hedgehog protein N-product is a morphogen which is essential for a variety of patterning events during development. Establishes the anterior-posterior axis of the embryonic segments and patterns the larval imaginal disks. Binds to the patched (ptc) receptor, which functions in association with smoothened (smo), to activate the transcription of target genes wingless (wg), decapentaplegic (dpp) and ptc. In the absence of hh, ptc represses the constitutive signaling activity of smo through fused (fu). Essential component of a signaling pathway which regulates the Duox-dependent gut immune response to bacterial uracil; required to activate Cad99C-dependent endosome formation, norpA-dependent Ca2+ mobilization and p38 MAPK, which are essential steps in the Duox-dependent production of reactive oxygen species (ROS) in response to intestinal bacterial infection. During photoreceptor differentiation, it up-regulates transcription of Ubr3, which in turn promotes the hh-signaling pathway by mediating the ubiquitination and degradation of cos. This chain is Protein hedgehog (hh-1), found in Drosophila pseudoobscura pseudoobscura (Fruit fly).